The following is a 390-amino-acid chain: Transforming growth factor beta-1 proprotein (390 aa).

A signal peptide spans 1-29 (MPPSGLRLLPLLLPLLWLLMLTPGRPVAG). The tract at residues 30 to 74 (LSTCKTIDMELVKRKGIEAIRGQILSKLRLASPPSQGDVPPGPLP) is straightjacket domain. Residues 75-271 (EAILALYNST…ATPLERAQHL (197 aa)) are arm domain. Residues N82, N136, and N176 are each glycosylated (N-linked (GlcNAc...) asparagine). The tract at residues 226 to 252 (DSKDNTLQVDINGFSSGRRGDLATIHG) is bowtie tail. A Cell attachment site motif is present at residues 244 to 246 (RGD). Cystine bridges form between C285-C294, C293-C356, C322-C387, and C326-C389.

It belongs to the TGF-beta family. In terms of assembly, homodimer; disulfide-linked. Interacts with the serine proteases, HTRA1 and HTRA3: the interaction with either inhibits TGFB1-mediated signaling and the HTRA protease activity is required for this inhibition. May interact with THSD4; this interaction may lead to sequestration by FBN1 microfibril assembly and attenuation of TGFB signaling. Interacts with CD109, DPT and ASPN. Interacts with EFEMP2. Interacts with TSKU; the interaction contributes to regulation of the hair cycle. Interacts with TGFBR3. As to quaternary structure, homodimer; disulfide-linked. Interacts with transforming growth factor beta-1 (TGF-beta-1) chain; interaction is non-covalent and maintains TGF-beta-1 in a latent state; each latency-associated peptide (LAP) monomer interacts with TGF-beta-1 in the other monomer. Interacts with LTBP1; leading to regulation of TGF-beta-1 activation. Interacts with LRRC32/GARP; leading to regulation of TGF-beta-1 activation on the surface of activated regulatory T-cells (Tregs). Interacts with LRRC33/NRROS; leading to regulation of TGF-beta-1 activation in macrophages and microglia. Interacts (via cell attachment site) with integrins ITGAV and ITGB6 (ITGAV:ITGB6), leading to release of the active TGF-beta-1. Interacts with NREP; the interaction results in a decrease in TGFB1 autoinduction. Interacts with HSP90AB1; inhibits latent TGFB1 activation. Homodimer; disulfide-linked. Interacts with TGF-beta receptors (TGFBR1 and TGFBR2), leading to signal transduction. In terms of processing, transforming growth factor beta-1 proprotein: The precursor proprotein is cleaved in the Golgi apparatus by FURIN to form Transforming growth factor beta-1 (TGF-beta-1) and Latency-associated peptide (LAP) chains, which remain non-covalently linked, rendering TGF-beta-1 inactive. N-glycosylated. Deglycosylation leads to activation of Transforming growth factor beta-1 (TGF-beta-1); mechanisms triggering deglycosylation-driven activation of TGF-beta-1 are however unclear.

The protein resides in the secreted. The protein localises to the extracellular space. It localises to the extracellular matrix. In terms of biological role, transforming growth factor beta-1 proprotein: Precursor of the Latency-associated peptide (LAP) and Transforming growth factor beta-1 (TGF-beta-1) chains, which constitute the regulatory and active subunit of TGF-beta-1, respectively. Required to maintain the Transforming growth factor beta-1 (TGF-beta-1) chain in a latent state during storage in extracellular matrix. Associates non-covalently with TGF-beta-1 and regulates its activation via interaction with 'milieu molecules', such as LTBP1, LRRC32/GARP and LRRC33/NRROS, that control activation of TGF-beta-1. Interaction with LRRC33/NRROS regulates activation of TGF-beta-1 in macrophages and microglia. Interaction with LRRC32/GARP controls activation of TGF-beta-1 on the surface of activated regulatory T-cells (Tregs). Interaction with integrins (ITGAV:ITGB6 or ITGAV:ITGB8) results in distortion of the Latency-associated peptide chain and subsequent release of the active TGF-beta-1. Its function is as follows. Multifunctional protein that regulates the growth and differentiation of various cell types and is involved in various processes, such as normal development, immune function, microglia function and responses to neurodegeneration. Activation into mature form follows different steps: following cleavage of the proprotein in the Golgi apparatus, Latency-associated peptide (LAP) and Transforming growth factor beta-1 (TGF-beta-1) chains remain non-covalently linked rendering TGF-beta-1 inactive during storage in extracellular matrix. At the same time, LAP chain interacts with 'milieu molecules', such as LTBP1, LRRC32/GARP and LRRC33/NRROS that control activation of TGF-beta-1 and maintain it in a latent state during storage in extracellular milieus. TGF-beta-1 is released from LAP by integrins (ITGAV:ITGB6 or ITGAV:ITGB8): integrin-binding to LAP stabilizes an alternative conformation of the LAP bowtie tail and results in distortion of the LAP chain and subsequent release of the active TGF-beta-1. Once activated following release of LAP, TGF-beta-1 acts by binding to TGF-beta receptors (TGFBR1 and TGFBR2), which transduce signal. While expressed by many cells types, TGF-beta-1 only has a very localized range of action within cell environment thanks to fine regulation of its activation by Latency-associated peptide chain (LAP) and 'milieu molecules'. Plays an important role in bone remodeling: acts as a potent stimulator of osteoblastic bone formation, causing chemotaxis, proliferation and differentiation in committed osteoblasts. Can promote either T-helper 17 cells (Th17) or regulatory T-cells (Treg) lineage differentiation in a concentration-dependent manner. At high concentrations, leads to FOXP3-mediated suppression of RORC and down-regulation of IL-17 expression, favoring Treg cell development. At low concentrations in concert with IL-6 and IL-21, leads to expression of the IL-17 and IL-23 receptors, favoring differentiation to Th17 cells. Stimulates sustained production of collagen through the activation of CREB3L1 by regulated intramembrane proteolysis (RIP). Mediates SMAD2/3 activation by inducing its phosphorylation and subsequent translocation to the nucleus. Positively regulates odontoblastic differentiation in dental papilla cells, via promotion of IPO7-mediated translocation of phosphorylated SMAD2 to the nucleus and subsequent transcription of target genes. Can induce epithelial-to-mesenchymal transition (EMT) and cell migration in various cell types. In Ovis aries (Sheep), this protein is Transforming growth factor beta-1 proprotein (TGFB1).